A 434-amino-acid polypeptide reads, in one-letter code: uncharacterized protein (434 aa).

11 helical membrane-spanning segments follow: residues 50–70 (GSIA…SFTL), 72–92 (TGLL…VLAI), 95–115 (LMAF…LLPV), 135–155 (SPVV…QFGW), 158–178 (SLIA…YFPH), 179–199 (LNPE…IAIT), 229–249 (LPYI…KIFA), 288–308 (GFVP…VAGF), 319–339 (PNPM…VLLL), 376–396 (IFAA…AIYF), and 412–432 (VVAV…GLFV).

It localises to the cell membrane. This is an uncharacterized protein from Escherichia coli (strain K12).